The following is a 549-amino-acid chain: MLLNSLFPSILAAATFVTSAAAEDLPPIEIVGNKFFYSNNGSQFYIKGIAYQQNNLDSNSTFVDPLADADNCKRDIPYLEQVDTNVIRVYALDVTQDHTECMQMLQDAGIYIIADLSQPDESINRNDPQWNLDLFERYTSVVDKFHNYTNVLGFFAGNEVTNNVSNTDASAFVKAAIRDTKAYIKAKGYRTIPVGYSANDDSDIRVSLARYFACGDEDESADFFGMNMYEWCGSSSFKASGYESATDDYKNLGIPIFFSEYGCNEVTPRKFQEVGTLFGSDMTDVWSGGIVYMYLQEENNYGLVSVSGSSVSTLQDFNSYKSEILDISPSSVQASAESASGVSRTSCPTNTDNWEASTELPPTPDKDICDCMSSSLKCVVADNVSTDDYSDLFDYVCAKIDCSGINANATTGDYGAYSPCGAKDKLSFVLNLYYEEQNESKSACDFSGSASLQSASTASSCAAYLSSAGVSGLGTVQGSVRTDTSEATTDSGSGSSNSGSASSSKSTSSSTSSGSSGSKSAATAVTVTTLTKIAAVGVSIIVGFGLITM.

An N-terminal signal peptide occupies residues 1–22 (MLLNSLFPSILAAATFVTSAAA). 2 N-linked (GlcNAc...) asparagine glycosylation sites follow: Asn-40 and Asn-59. Residues Cys-72 and Cys-101 are joined by a disulfide bond. 2 N-linked (GlcNAc...) asparagine glycosylation sites follow: Asn-147 and Asn-163. 5 disulfide bridges follow: Cys-214–Cys-347, Cys-232–Cys-263, Cys-369–Cys-420, Cys-378–Cys-444, and Cys-397–Cys-402. Positions 336 to 356 (AESASGVSRTSCPTNTDNWEA) are enriched in polar residues. Positions 336–361 (AESASGVSRTSCPTNTDNWEASTELP) are disordered. Asn-383 is a glycosylation site (N-linked (GlcNAc...) asparagine). Asn-408 and Asn-438 each carry an N-linked (GlcNAc...) asparagine glycan. The interval 479–519 (SVRTDTSEATTDSGSGSSNSGSASSSKSTSSSTSSGSSGSK) is disordered. Over residues 487–519 (ATTDSGSGSSNSGSASSSKSTSSSTSSGSSGSK) the composition is skewed to low complexity.

It belongs to the glycosyl hydrolase 72 family.

It is found in the cell membrane. This Candida maltosa (Yeast) protein is Protein EPD1 (EPD1).